A 401-amino-acid polypeptide reads, in one-letter code: Argininosuccinate synthase (401 aa).

Position 8-16 (Ala-8–Ser-16) interacts with ATP. Tyr-87 contributes to the L-citrulline binding site. Residue Gly-117 coordinates ATP. Thr-119, Asn-123, and Asp-124 together coordinate L-aspartate. Asn-123 is an L-citrulline binding site. Residues Arg-127, Ser-175, Glu-259, and Tyr-271 each contribute to the L-citrulline site.

It belongs to the argininosuccinate synthase family. Type 1 subfamily. In terms of assembly, homotetramer.

The protein localises to the cytoplasm. It carries out the reaction L-citrulline + L-aspartate + ATP = 2-(N(omega)-L-arginino)succinate + AMP + diphosphate + H(+). It functions in the pathway amino-acid biosynthesis; L-arginine biosynthesis; L-arginine from L-ornithine and carbamoyl phosphate: step 2/3. The protein is Argininosuccinate synthase of Arthrobacter sp. (strain FB24).